Consider the following 75-residue polypeptide: MPQISRYSDEQVEQLLAELLNVLEKHKAPTDLSLMVSGNMVTNLINTSIAPAQRQAIANSFARALQSSINEDKAH.

This sequence belongs to the UPF0352 family.

This Shigella dysenteriae serotype 1 (strain Sd197) protein is UPF0352 protein YejL.